The sequence spans 489 residues: MTSIGQLRSQVASKERSAVEVARQYLERAERLDTEVHAFLRLTPERALAAAEAVDAKIARGEDPGLLAGVPVAVKDNLCMVGIPTTCASKILENYRPPYESTVTRRLEEQGALIIGKTNLDEFAMGSSTENSAFGPTRNPWDLGRVPGGSSGGSAAAVAACEAVASLGSDTGGSIRQPASFCGVVGLKPTYGLVSRYGLIAFASSLDQIGPFTRTVEDAALVLQAIAGHDPLDSTSLAVNVPDYRQALISDLKGVKVGFVKEFFAEGLDPDVADAVFEAIEVMRDLGAQIQEVSCPRFARGLSTYYIIATSEASANLARYDGVKYGLRDREADALVPMYGRTREEGFGSEVKRRIMLGTYALSAGYYDAYYLKAQKVRTLIKQDYLDAFAKVDVLVGPTAPTTAFAFGDKVSDPLSMYLSDIYTIPLNLAGVAGASIPCGFDAKGLPIGFQIMANALEEGKLLRAAYAYEQATEWHKRTPALAAEALTR.

Catalysis depends on charge relay system residues K75 and S150. The active-site Acyl-ester intermediate is S174.

It belongs to the amidase family. GatA subfamily. As to quaternary structure, heterotrimer of A, B and C subunits.

It catalyses the reaction L-glutamyl-tRNA(Gln) + L-glutamine + ATP + H2O = L-glutaminyl-tRNA(Gln) + L-glutamate + ADP + phosphate + H(+). Allows the formation of correctly charged Gln-tRNA(Gln) through the transamidation of misacylated Glu-tRNA(Gln) in organisms which lack glutaminyl-tRNA synthetase. The reaction takes place in the presence of glutamine and ATP through an activated gamma-phospho-Glu-tRNA(Gln). This is Glutamyl-tRNA(Gln) amidotransferase subunit A from Gloeobacter violaceus (strain ATCC 29082 / PCC 7421).